A 441-amino-acid polypeptide reads, in one-letter code: Peroxisomal biogenesis factor 3 (441 aa).

The Peroxisomal portion of the chain corresponds to 1 to 17; the sequence is MAPNQRSRSLLQRHRGK. A helical membrane pass occupies residues 18–39; the sequence is VLISLTGIAALFTTGSVVVFFV. Residues 40–441 are Cytoplasmic-facing; the sequence is KRWLYKQQLR…GVSSSFSFKP (402 aa).

This sequence belongs to the peroxin-3 family. As to quaternary structure, interacts with MSP1; leading to inhibit the translocase activity of MSP1.

The protein localises to the peroxisome membrane. In terms of biological role, involved in peroxisome biosynthesis. Acts as a regulator of MSP1 by inhibiting the ability of MSP1 to unfold target proteins. This chain is Peroxisomal biogenesis factor 3 (PEX3), found in Saccharomyces cerevisiae (strain ATCC 204508 / S288c) (Baker's yeast).